We begin with the raw amino-acid sequence, 431 residues long: MASPHPRKKRIVQKLPSLTQSCNGELRPCPECLQPHFSKIPILSQLITEHKFMCVSEISAHKVVFKLPKSWFQCEHLKPQEDAVLGSGSFGSVKPISKVTCAKYFTDPVDFYHELIACNLAALAQIRNSTRAIYLVRMTGAYIPCKCILFPRYAGSLYDFKCWDKISAKKLAKEFKSLVNAVNFLNDEVGIIHSDISTSNILVAHGPDFPGTFLLADLGVASLHSGNHQTELCVKNSRGKILYNMSCTRDIFLLCKDPVKPAQVIFRCYLLACKLINSETLHQTFIVGKILAQNIDMASLFYTMLECVEKMLDTKDIKPSREFYNKIGPDDESHKAYFLQFLVPRVVLLEMLSRLWDTKLSIGIDSFGNTTEKNVLEVQDKILFASWCTHLKGFLHKGGLQLNLNKLRAQPLYELVRFFLKFDYFSLSGRQ.

One can recognise a Protein kinase domain in the interval 79–368; it reads PQEDAVLGSG…KLSIGIDSFG (290 aa). ATP is bound by residues 85–93 and Lys103; that span reads LGSGSFGSV. The active-site Proton acceptor is Asp195.

This sequence belongs to the protein kinase superfamily. Tyr protein kinase family. HCMV ganciclovir subfamily.

In terms of biological role, phosphorylates the antiviral nucleoside analog ganciclovir. This Saimiriine herpesvirus 2 (strain 11) (SaHV-2) protein is Probable ganciclovir kinase (36).